Here is a 438-residue protein sequence, read N- to C-terminus: Na(+)/H(+) antiporter NhaA (438 aa).

11 helical membrane passes run 23-43, 62-82, 104-124, 133-153, 162-182, 185-205, 221-241, 302-322, 337-357, 372-392, and 410-430; these read FGGI…NSFL, FFIG…LFFL, SFPV…YFFL, GFGI…MLLG, VFLI…IALF, TNLK…LALL, VLLW…AVVL, FLAP…NAGV, FGVI…ITFI, WWHI…SMFI, and IAIL…LFAL.

This sequence belongs to the NhaA Na(+)/H(+) (TC 2.A.33) antiporter family.

It is found in the cell inner membrane. The enzyme catalyses Na(+)(in) + 2 H(+)(out) = Na(+)(out) + 2 H(+)(in). Its function is as follows. Na(+)/H(+) antiporter that extrudes sodium in exchange for external protons. The polypeptide is Na(+)/H(+) antiporter NhaA (Helicobacter pylori (strain P12)).